The following is a 400-amino-acid chain: ATP-dependent rRNA helicase RRP3 (400 aa).

Residues 1 to 29 (MEFGDLRIDESLIKTCQEKGITRPTEVQR) carry the Q motif motif. The Helicase ATP-binding domain occupies 32 to 202 (IPAVLGGGDV…SSILKRPKTI (171 aa)). 45–52 (SQTGSGKT) contacts ATP. The DEAD box signature appears at 150 to 153 (DEAD). The 145-residue stretch at 229-373 (ALVELLEMSQ…EFKMMKKNFG (145 aa)) folds into the Helicase C-terminal domain.

The protein belongs to the DEAD box helicase family. DDX47/RRP3 subfamily. Interacts with the SSU processome.

It localises to the nucleus. It carries out the reaction ATP + H2O = ADP + phosphate + H(+). Its function is as follows. ATP-dependent rRNA helicase required for pre-ribosomal RNA processing. Involved in the maturation of the 35S-pre-rRNA and to its cleavage to mature 18S rRNA. The chain is ATP-dependent rRNA helicase RRP3 from Encephalitozoon cuniculi (strain GB-M1) (Microsporidian parasite).